The chain runs to 92 residues: Small ribosomal subunit protein bS20 (92 aa).

This sequence belongs to the bacterial ribosomal protein bS20 family.

In terms of biological role, binds directly to 16S ribosomal RNA. In Thermosipho africanus (strain TCF52B), this protein is Small ribosomal subunit protein bS20.